The primary structure comprises 116 residues: Large ribosomal subunit protein bL19 (116 aa).

This sequence belongs to the bacterial ribosomal protein bL19 family.

In terms of biological role, this protein is located at the 30S-50S ribosomal subunit interface and may play a role in the structure and function of the aminoacyl-tRNA binding site. In Haemophilus influenzae (strain 86-028NP), this protein is Large ribosomal subunit protein bL19.